Reading from the N-terminus, the 693-residue chain is Homeobox protein caupolican (693 aa).

Disordered regions lie at residues 20-104 (TANT…PSRG), 288-331 (NKMT…PGNQ), 387-453 (AQSH…DCGI), 480-538 (YLGQ…PLSM), 561-627 (MHLP…SMHS), and 648-693 (YGHG…RSGS). Positions 41–59 (ASLSPSGGSTATGLTAGPL) are enriched in low complexity. Positions 226–288 (LAARRKNATR…NARRRLKKEN (63 aa)) form a DNA-binding region, homeobox; TALE-type. Basic and acidic residues-rich tracts occupy residues 288-298 (NKMTWEPKNKT) and 308-317 (DDEKEKDAGD). Composition is skewed to low complexity over residues 397 to 419 (HPQQ…QLQH) and 493 to 515 (QQLP…QQQQ). The segment covering 516–527 (QHHHHPHHHHPH) has biased composition (basic residues). Over residues 609–627 (SSGGSSSSSGSSHSSSMHS) the composition is skewed to low complexity. Positions 651–675 (GHSHGHGHGHGHGLGHGHGLGHGHG) are enriched in basic residues.

It belongs to the TALE/IRO homeobox family.

Its subcellular location is the nucleus. In terms of biological role, controls proneural and vein forming genes. Positive transcriptional controller of ac-sc (achaete-scute). May act as an activator that interacts with the transcriptional complex assembled on the ac and sc promoters and participates in transcription initiation. This Drosophila melanogaster (Fruit fly) protein is Homeobox protein caupolican (caup).